The primary structure comprises 270 residues: Orotidine 5'-phosphate decarboxylase (270 aa).

Residues aspartate 39, 61–63 (KTH), 93–102 (DRKFADIGNT), tyrosine 221, and arginine 239 each bind substrate. The Proton donor role is filled by lysine 95.

Belongs to the OMP decarboxylase family.

It catalyses the reaction orotidine 5'-phosphate + H(+) = UMP + CO2. Its pathway is pyrimidine metabolism; UMP biosynthesis via de novo pathway; UMP from orotate: step 2/2. The chain is Orotidine 5'-phosphate decarboxylase (URA3) from Candida dubliniensis (strain CD36 / ATCC MYA-646 / CBS 7987 / NCPF 3949 / NRRL Y-17841) (Yeast).